The chain runs to 179 residues: ADP-ribosylation factor-like protein 5B (179 aa).

G2 carries the N-myristoyl glycine lipid modification. GTP contacts are provided by residues G23 to T30, D66 to Q70, N125 to D128, and A159.

This sequence belongs to the small GTPase superfamily. Arf family.

Its function is as follows. Binds and exchanges GTP and GDP. This Mus musculus (Mouse) protein is ADP-ribosylation factor-like protein 5B (Arl5b).